The sequence spans 222 residues: Large ribosomal subunit protein uL4 (222 aa).

The interval 50 to 72 is disordered; it reads TRGRSEVSHSTKKPFRQKGTGNA.

This sequence belongs to the universal ribosomal protein uL4 family. Part of the 50S ribosomal subunit.

Its function is as follows. One of the primary rRNA binding proteins, this protein initially binds near the 5'-end of the 23S rRNA. It is important during the early stages of 50S assembly. It makes multiple contacts with different domains of the 23S rRNA in the assembled 50S subunit and ribosome. In terms of biological role, forms part of the polypeptide exit tunnel. The sequence is that of Large ribosomal subunit protein uL4 from Chlamydia trachomatis serovar A (strain ATCC VR-571B / DSM 19440 / HAR-13).